A 187-amino-acid chain; its full sequence is UPF0301 protein YqgE (187 aa).

This sequence belongs to the UPF0301 (AlgH) family.

In Salmonella paratyphi B (strain ATCC BAA-1250 / SPB7), this protein is UPF0301 protein YqgE.